The sequence spans 247 residues: Sugar fermentation stimulation protein homolog (247 aa).

It belongs to the SfsA family.

This is Sugar fermentation stimulation protein homolog from Methanococcoides burtonii (strain DSM 6242 / NBRC 107633 / OCM 468 / ACE-M).